Reading from the N-terminus, the 304-residue chain is Sulfate adenylyltransferase subunit 2 (304 aa).

It belongs to the PAPS reductase family. CysD subfamily. In terms of assembly, heterodimer composed of CysD, the smaller subunit, and CysNC.

The enzyme catalyses sulfate + ATP + H(+) = adenosine 5'-phosphosulfate + diphosphate. The protein operates within sulfur metabolism; hydrogen sulfide biosynthesis; sulfite from sulfate: step 1/3. Functionally, with CysN forms the ATP sulfurylase (ATPS) that catalyzes the adenylation of sulfate producing adenosine 5'-phosphosulfate (APS) and diphosphate, the first enzymatic step in sulfur assimilation pathway. APS synthesis involves the formation of a high-energy phosphoric-sulfuric acid anhydride bond driven by GTP hydrolysis by CysN coupled to ATP hydrolysis by CysD. In Xylella fastidiosa (strain Temecula1 / ATCC 700964), this protein is Sulfate adenylyltransferase subunit 2.